Consider the following 184-residue polypeptide: Major fimbrial subunit (184 aa).

The first 22 residues, 1 to 22 (MKLSKIALAAALVFGINSVATA), serve as a signal peptide directing secretion. A disulfide bond links cysteine 49 and cysteine 88.

It belongs to the fimbrial protein family.

It is found in the fimbrium. In terms of biological role, major structural component of PMF fimbriae. This is Major fimbrial subunit (pmfA) from Proteus mirabilis (strain HI4320).